The following is a 324-amino-acid chain: uncharacterized protein (324 aa).

The HTH lysR-type domain occupies 1–58 (MDIKVMEYAAEIARRQSFTKAAEHLHIAQPSLSQQIKKLEAELGLTLFHRSHGSVTLT). The H-T-H motif DNA-binding region spans 18 to 37 (FTKAAEHLHIAQPSLSQQIK).

It belongs to the LysR transcriptional regulatory family.

This is an uncharacterized protein from Bacillus subtilis (strain 168).